A 487-amino-acid chain; its full sequence is Probable UDP-N-acetylglucosamine pyrophosphorylase (487 aa).

The Substrate binding signature appears at 105 to 108 (LAGG). Residues 105-108 (LAGG), Lys119, Gln198, and Gly225 contribute to the UTP site. Residue Asn226 coordinates substrate. Asp256 contributes to the UTP binding site. Residues 307-308 (EY) carry the Substrate binding motif. Lys382 serves as a coordination point for UTP. Lys412 contacts substrate.

This sequence belongs to the UDPGP type 1 family.

Its subcellular location is the cytoplasm. It carries out the reaction N-acetyl-alpha-D-glucosamine 1-phosphate + UTP + H(+) = UDP-N-acetyl-alpha-D-glucosamine + diphosphate. It participates in nucleotide-sugar biosynthesis; UDP-N-acetyl-alpha-D-glucosamine biosynthesis; UDP-N-acetyl-alpha-D-glucosamine from N-acetyl-alpha-D-glucosamine 1-phosphate: step 1/1. In Dictyostelium discoideum (Social amoeba), this protein is Probable UDP-N-acetylglucosamine pyrophosphorylase (uap1).